A 100-amino-acid polypeptide reads, in one-letter code: Small ribosomal subunit protein uS14 (100 aa).

Residues cysteine 63, cysteine 66, cysteine 79, and cysteine 82 each coordinate Zn(2+).

This sequence belongs to the universal ribosomal protein uS14 family. Part of the 30S ribosomal subunit. Contacts proteins S3 and S10. It depends on Zn(2+) as a cofactor.

Binds 16S rRNA, required for the assembly of 30S particles and may also be responsible for determining the conformation of the 16S rRNA at the A site. This chain is Small ribosomal subunit protein uS14 (rpsN), found in Legionella pneumophila (strain Paris).